Here is a 66-residue protein sequence, read N- to C-terminus: uncharacterized protein (66 aa).

This sequence to M.jannaschii MJ0582.

This is an uncharacterized protein from Methanocaldococcus jannaschii (strain ATCC 43067 / DSM 2661 / JAL-1 / JCM 10045 / NBRC 100440) (Methanococcus jannaschii).